The sequence spans 226 residues: PKHD-type hydroxylase Bind_0236 (226 aa).

The Fe2OG dioxygenase domain maps to 78 to 178 (TIFPPLFNRY…RIASFFWIQS (101 aa)). Residues histidine 96, aspartate 98, and histidine 159 each coordinate Fe cation. Arginine 169 contacts 2-oxoglutarate.

It depends on Fe(2+) as a cofactor. L-ascorbate is required as a cofactor.

In Beijerinckia indica subsp. indica (strain ATCC 9039 / DSM 1715 / NCIMB 8712), this protein is PKHD-type hydroxylase Bind_0236.